The following is a 96-amino-acid chain: uncharacterized protein (96 aa).

The next 2 membrane-spanning stretches (helical) occupy residues 27–47 (LYTV…FFFF) and 52–72 (MSAG…RPTI).

Its subcellular location is the cell membrane. This is an uncharacterized protein from Bacillus subtilis (strain 168).